We begin with the raw amino-acid sequence, 176 residues long: MTSPSPLVGIIMGSDSDLPTMAAAIAVCEEFAVPTEVAIISAHRTPERMVEYAQTAHQRGLRIIIAGAGGAAHLPGMVAALTPLPVIGVPVQTKTLQGVDSLYSIVQMPGGIPVATVAIGNAKNAGLLAVQILASHNPVLLEKVQQYRQSLETMVLDKQAELERLGYRAYLDQQNQ.

Substrate is bound by residues Ser14, Asp17, and Arg44.

Belongs to the AIR carboxylase family. Class I subfamily.

The enzyme catalyses 5-carboxyamino-1-(5-phospho-D-ribosyl)imidazole + H(+) = 5-amino-1-(5-phospho-D-ribosyl)imidazole-4-carboxylate. It functions in the pathway purine metabolism; IMP biosynthesis via de novo pathway; 5-amino-1-(5-phospho-D-ribosyl)imidazole-4-carboxylate from 5-amino-1-(5-phospho-D-ribosyl)imidazole (N5-CAIR route): step 2/2. In terms of biological role, catalyzes the conversion of N5-carboxyaminoimidazole ribonucleotide (N5-CAIR) to 4-carboxy-5-aminoimidazole ribonucleotide (CAIR). The sequence is that of N5-carboxyaminoimidazole ribonucleotide mutase from Synechocystis sp. (strain ATCC 27184 / PCC 6803 / Kazusa).